A 173-amino-acid polypeptide reads, in one-letter code: Globin-like host-protective antigen (173 aa).

Residues 1 to 15 form the signal peptide; the sequence is MRFLLLAAFVAYAYA. One can recognise a Globin domain in the interval 25 to 166; the sequence is ALSALDVVPL…FNDEAQKQLA (142 aa). Residue His-114 coordinates heme b.

Belongs to the globin family.

It is found in the secreted. Its subcellular location is the extracellular space. Functionally, may be a globin and may play a role in oxygen transport. In Trichostrongylus colubriformis (Black scour worm), this protein is Globin-like host-protective antigen.